The primary structure comprises 565 residues: Acyl-CoA ligase easD (565 aa).

ATP-binding positions include 213 to 221 (TSGTSGKQK), 354 to 359 (HAYGLT), D438, R457, and K555. An SBD1 region spans residues 284–354 (DMQLMLKTIE…KLRPTWKINH (71 aa)). The interval 355–417 (AYGLTETGVV…FNSPSCFLGY (63 aa)) is SBD2.

This sequence belongs to the ATP-dependent AMP-binding enzyme family.

It functions in the pathway antibiotic biosynthesis. Functionally, acyl-CoA ligase; part of the gene cluster that mediates the biosynthesis of emericellamides, secondary metabolites acting as antibiotics. The biosynthesis of emericellamides initiates from the highly reducing polyketide synthase easB which catalyzes the formation of the linear polyketide chain. EasB produces several polyketides that can be further processed by the downstream enzymes. The polyketides are released from easB as linear polyketide carboxylic acids, which are converted to CoA thioesters by the acyl-CoA ligase easD. The substrates are then loaded onto the acyltransferase easC, which shuttles them to the first thiolation (T) domain of the nonribosomal peptide synthetase easA. EasA then performs condensation of the polyketides with one glycine, two alanine, one valine and one leucine residues. A last step of cyclization leads to the production of emericellamides. This is Acyl-CoA ligase easD from Emericella nidulans (strain FGSC A4 / ATCC 38163 / CBS 112.46 / NRRL 194 / M139) (Aspergillus nidulans).